The sequence spans 493 residues: Ectonucleotide pyrophosphatase/phosphodiesterase 2 (493 aa).

Over 1–28 (MLLFEQPVDLEKNNEDDTNIKPFAISRH) the chain is Cytoplasmic. Residues 29-45 (FLLKLLLCGIILIELLL) form a helical; Signal-anchor for type II membrane protein membrane-spanning segment. Residues 46–493 (YSKCPKPIDN…KTKKEKSLLQ (448 aa)) lie on the Extracellular side of the membrane. N-linked (GlcNAc...) asparagine glycosylation is found at Asn62, Asn69, and Asn112. The phosphodiesterase stretch occupies residues 76 to 438 (TLTILISIDG…IGIMGTHGYN (363 aa)). The active-site Nucleophile is the Thr127. N-linked (GlcNAc...) asparagine glycosylation is found at Asn153 and Asn441.

Belongs to the nucleotide pyrophosphatase/phosphodiesterase family. Post-translationally, autophosphorylated as part of the catalytic cycle of phosphodiesterase/pyrophosphatase activity.

It is found in the membrane. The enzyme catalyses Hydrolytically removes 5'-nucleotides successively from the 3'-hydroxy termini of 3'-hydroxy-terminated oligonucleotides.. The catalysed reaction is a ribonucleoside 5'-triphosphate + H2O = a ribonucleoside 5'-phosphate + diphosphate + H(+). It catalyses the reaction a 2'-deoxyribonucleoside 5'-triphosphate + H2O = a 2'-deoxyribonucleoside 5'-phosphate + diphosphate + H(+). Functionally, mediates extracellular nucleotide derived phosphate hydrolysis along with NPP1 and PHO5. This Saccharomyces cerevisiae (strain ATCC 204508 / S288c) (Baker's yeast) protein is Ectonucleotide pyrophosphatase/phosphodiesterase 2 (NPP2).